Consider the following 222-residue polypeptide: CASP-like protein 1E1 (222 aa).

At 1-59 (MEASRVKPGFNGVGMAAGSVNGSSRRPGPGLGYGYGYYMGSGAAAGGSGRAAQAPVDGC) the chain is on the cytoplasmic side. The chain crosses the membrane as a helical span at residues 60 to 80 (SVALRVFVVASTLVSAVVMGV). Residues 81–110 (DRQTRTIQITITDALPPLEVPLTANWSYSS) are Extracellular-facing. The N-linked (GlcNAc...) asparagine glycan is linked to asparagine 105. Residues 111-131 (AFVYFVVANAMVCLFSAAALA) form a helical membrane-spanning segment. Residues 132 to 146 (ACRSRAAMVPVMVGD) lie on the Cytoplasmic side of the membrane. A helical transmembrane segment spans residues 147–167 (LLALALLYSAVGAAAEFGILG). At 168–189 (ERGNSHVRWAKVCNVYGRFCDR) the chain is on the extracellular side. Residues 190–210 (AMAAVIVSLIGAFANLVLLML) traverse the membrane as a helical segment. Over 211 to 222 (NILTIHKSSSYY) the chain is Cytoplasmic.

This sequence belongs to the Casparian strip membrane proteins (CASP) family. Homodimer and heterodimers.

Its subcellular location is the cell membrane. The chain is CASP-like protein 1E1 from Sorghum bicolor (Sorghum).